The primary structure comprises 60 residues: Large ribosomal subunit protein uL30 (60 aa).

Belongs to the universal ribosomal protein uL30 family. In terms of assembly, part of the 50S ribosomal subunit.

The protein is Large ribosomal subunit protein uL30 of Streptococcus mutans serotype c (strain ATCC 700610 / UA159).